Reading from the N-terminus, the 746-residue chain is Long-chain-alcohol oxidase FAO3 (746 aa).

The helical transmembrane segment at 139-159 (ILTPIRAAFVYIKVAFLFCFF) threads the bilayer. Residue 233 to 248 (CDVVVVGSGSGGGVAA) coordinates FAD. The active-site Proton acceptor is histidine 677.

This sequence belongs to the GMC oxidoreductase family.

The protein localises to the membrane. The catalysed reaction is a long-chain primary fatty alcohol + O2 = a long-chain fatty aldehyde + H2O2. Functionally, long-chain fatty alcohol oxidase involved in the omega-oxidation pathway of lipid degradation. The polypeptide is Long-chain-alcohol oxidase FAO3 (FAO3) (Arabidopsis thaliana (Mouse-ear cress)).